A 609-amino-acid polypeptide reads, in one-letter code: Grainyhead-like protein 1 homolog (609 aa).

The interval 1 to 91 (MTQDYDNKRP…EHDHADHEHS (91 aa)) is transcription activation. The segment at 183-207 (SDHFTSNNQPPNSQRRTPDSTFSET) is disordered. The segment covering 185–206 (HFTSNNQPPNSQRRTPDSTFSE) has biased composition (polar residues). The Grh/CP2 DB domain maps to 239–465 (AGNNFEYTLE…DLDTQPVLFI (227 aa)). 2 interaction with DNA regions span residues 371–380 (TDFSSQKGVK) and 418–421 (RKIR).

It belongs to the grh/CP2 family. Grainyhead subfamily. As to quaternary structure, binds DNA as homodimer.

It is found in the nucleus. Functionally, transcription factor involved in epithelial development. Binds directly to the consensus DNA sequence 5'-AACCGGTT-3' and modulates expression of epidermal-specific genes, including XK81A1. Important regulator of DSG1 in the context of epidermal differentiation. Regulates the maintenance of skin barrier. No genetic interaction with GRHL3, nor functional cooperativity due to diverse target gene selectivity during epithelia development. Functions downstream of BMP-signaling cascade modulating endogenous bmp4-responsive targets. This is Grainyhead-like protein 1 homolog from Xenopus laevis (African clawed frog).